Reading from the N-terminus, the 251-residue chain is NADPH-dependent oxidoreductase (251 aa).

The protein belongs to the flavin oxidoreductase frp family. It depends on FMN as a cofactor.

Functionally, reduces FMN, organic nitro compounds and disulfide DTNB. Involved in maintenance of the cellular redox state and the disulfide stress response. In Staphylococcus saprophyticus subsp. saprophyticus (strain ATCC 15305 / DSM 20229 / NCIMB 8711 / NCTC 7292 / S-41), this protein is NADPH-dependent oxidoreductase (nfrA).